The primary structure comprises 126 residues: Large ribosomal subunit protein bL12 (126 aa).

The protein belongs to the bacterial ribosomal protein bL12 family. As to quaternary structure, homodimer. Part of the ribosomal stalk of the 50S ribosomal subunit. Forms a multimeric L10(L12)X complex, where L10 forms an elongated spine to which 2 to 4 L12 dimers bind in a sequential fashion. Binds GTP-bound translation factors.

In terms of biological role, forms part of the ribosomal stalk which helps the ribosome interact with GTP-bound translation factors. Is thus essential for accurate translation. This Methylobacterium nodulans (strain LMG 21967 / CNCM I-2342 / ORS 2060) protein is Large ribosomal subunit protein bL12.